A 542-amino-acid chain; its full sequence is Chaperonin GroEL (542 aa).

ATP contacts are provided by residues Thr-29–Pro-32, Asp-86–Thr-90, Gly-413, Asn-476–Ala-478, and Asp-492. Residues Pro-522–Met-542 are disordered.

This sequence belongs to the chaperonin (HSP60) family. In terms of assembly, forms a cylinder of 14 subunits composed of two heptameric rings stacked back-to-back. Interacts with the co-chaperonin GroES.

The protein resides in the cytoplasm. It catalyses the reaction ATP + H2O + a folded polypeptide = ADP + phosphate + an unfolded polypeptide.. Functionally, together with its co-chaperonin GroES, plays an essential role in assisting protein folding. The GroEL-GroES system forms a nano-cage that allows encapsulation of the non-native substrate proteins and provides a physical environment optimized to promote and accelerate protein folding. The chain is Chaperonin GroEL from Listeria monocytogenes serotype 4a (strain HCC23).